Here is a 909-residue protein sequence, read N- to C-terminus: ABC transporter B family member 1 (909 aa).

The segment at 1-36 (MTKKNFNDEENESLLETYNKQQQKQSISTTNRSDQK) is disordered. Positions 14–36 (LLETYNKQQQKQSISTTNRSDQK) are enriched in polar residues. Residues 85–105 (LFIQIVSLVILAGYLISINAL) form a helical membrane-spanning segment. The span at 125–134 (TDSGSVSPTS) shows a compositional bias: low complexity. The segment at 125-147 (TDSGSVSPTSTPSPTPTPTPSPT) is disordered. A compositionally biased stretch (pro residues) spans 135–145 (TPSPTPTPTPS). The next 8 helical transmembrane spans lie at 182 to 202 (FSTF…LLLI), 206 to 226 (SFIY…YNVI), 275 to 295 (IIIV…VLHI), 347 to 367 (LPII…SLAM), 392 to 412 (LALV…SWLF), 480 to 500 (VILL…IVPV), 572 to 592 (GVFS…IVYV), and 607 to 627 (LTSF…ISSL). The ABC transmembrane type-1 domain maps to 350–633 (ILAAMVALVF…ISSLMTDFLK (284 aa)). One can recognise an ABC transporter domain in the interval 666-902 (IELKDVEFSY…TDGIYHNLVK (237 aa)). Residue 701 to 708 (GPSGGGKS) participates in ATP binding.

The protein belongs to the ABC transporter superfamily. ABCB family.

Its subcellular location is the membrane. The protein is ABC transporter B family member 1 (abcB1) of Dictyostelium discoideum (Social amoeba).